Consider the following 106-residue polypeptide: uncharacterized protein (106 aa).

This is an uncharacterized protein from Escherichia coli O157:H7.